A 981-amino-acid polypeptide reads, in one-letter code: Colossin-C (981 aa).

A signal peptide spans 1-23; the sequence is MKILYSLLLISSIILNTVLNISS. Residue N63 is glycosylated (N-linked (GlcNAc...) asparagine). Residues 172 to 195 are disordered; sequence EQTQPPTQPPTQPPTQPPTPPPFT. A compositionally biased stretch (pro residues) spans 177–194; that stretch reads PTQPPTQPPTQPPTPPPF. Residues N222, N591, and N811 are each glycosylated (N-linked (GlcNAc...) asparagine).

It belongs to the serine-aspartate repeat-containing protein (SDr) family.

It is found in the secreted. This chain is Colossin-C (colC), found in Dictyostelium discoideum (Social amoeba).